Consider the following 281-residue polypeptide: CCAAT/enhancer-binding protein epsilon (281 aa).

The interval 1–30 (MSHGTYYECEPRGGQQPLEFSGGRAGPGEL) is disordered. Residue lysine 121 forms a Glycyl lysine isopeptide (Lys-Gly) (interchain with G-Cter in SUMO2) linkage. Position 181 is a phosphoserine (serine 181). A bZIP domain is found at 204–267 (SLEYRLRRER…DTLRNLFRQI (64 aa)). Residues 208–228 (RLRRERNNIAVRKSRDKAKRR) are basic motif. The leucine-zipper stretch occupies residues 230 to 237 (LETQQKVL).

This sequence belongs to the bZIP family. C/EBP subfamily. As to quaternary structure, binds DNA as a homodimer and as a heterodimer. Can form stable heterodimers with CEBPA, CEBPB and CEBPD. Interacts with GATA1 and SPI1. Interacts with SMARCD2. Phosphorylated. As to expression, strongest expression occurs in promyelocyte and late-myeloblast-like cell lines.

Its subcellular location is the nucleus. In terms of biological role, transcriptional activator. C/EBP are DNA-binding proteins that recognize two different motifs: the CCAAT homology common to many promoters and the enhanced core homology common to many enhancers. Required for the promyelocyte-myelocyte transition in myeloid differentiation. The sequence is that of CCAAT/enhancer-binding protein epsilon (CEBPE) from Homo sapiens (Human).